The sequence spans 730 residues: Ribosomal RNA large subunit methyltransferase K/L (730 aa).

Positions 46 to 157 (TAYRLCLWSR…RGEAILSLDL (112 aa)) constitute a THUMP domain. A compositionally biased stretch (basic and acidic residues) spans 399-408 (AAVEEGEPRR). Residues 399–418 (AAVEEGEPRRQAPVASEPAR) are disordered.

The protein belongs to the methyltransferase superfamily. RlmKL family.

It localises to the cytoplasm. It catalyses the reaction guanosine(2445) in 23S rRNA + S-adenosyl-L-methionine = N(2)-methylguanosine(2445) in 23S rRNA + S-adenosyl-L-homocysteine + H(+). The enzyme catalyses guanosine(2069) in 23S rRNA + S-adenosyl-L-methionine = N(2)-methylguanosine(2069) in 23S rRNA + S-adenosyl-L-homocysteine + H(+). Specifically methylates the guanine in position 2445 (m2G2445) and the guanine in position 2069 (m7G2069) of 23S rRNA. This is Ribosomal RNA large subunit methyltransferase K/L from Pseudomonas entomophila (strain L48).